The chain runs to 447 residues: MKPVIALVGRPNVGKSTLFNRMTRSRDALVADLPGLTRDRHYGEGRIGDRPFIAIDTGGFEPVVKEGIVAEMAKQTRQAVVEADVVIFIVDGRLGLAPQDRAIADYLRKTGRRVMLAVNKAEGMKYTSVAADFYELGMGDPYAISAAHGDGVRELVDEALELAVQERPELAEEDADSGKGVKIAIVGRPNVGKSTLVNTLIGEERVIAFDMPGTTRDAIYVEFERGGKPYTLIDTAGLRRRGKVFEAIEKFSVVKTLQSIADANVVILLLDAQQDISDQDAHIAGFIVESGRALVVGVNKWDGLDGHTRDRIKHDLERKLQFLSFANFHFVSARERTGIGALMRSVDDAYAAAMVKLPTPQLTRVLQEAVEFQQPKRAGVSRPKLRYAHQGGSNPPIIVIHGNALSSVSETYRRYLENRYRAAFKLKGTPLRIEFRTNKNPYADSKD.

EngA-type G domains are found at residues 3–167 (PVIA…VQER) and 181–354 (VKIA…AAAM). Residues 9-16 (GRPNVGKS), 56-60 (DTGGF), 119-122 (NKAE), 187-194 (GRPNVGKS), 234-238 (DTAGL), and 299-302 (NKWD) each bind GTP. The 85-residue stretch at 355–439 (VKLPTPQLTR…PLRIEFRTNK (85 aa)) folds into the KH-like domain.

The protein belongs to the TRAFAC class TrmE-Era-EngA-EngB-Septin-like GTPase superfamily. EngA (Der) GTPase family. As to quaternary structure, associates with the 50S ribosomal subunit.

GTPase that plays an essential role in the late steps of ribosome biogenesis. The sequence is that of GTPase Der from Cupriavidus pinatubonensis (strain JMP 134 / LMG 1197) (Cupriavidus necator (strain JMP 134)).